The following is a 404-amino-acid chain: AT-hook motif nuclear-localized protein 3 (404 aa).

Disordered regions lie at residues 1 to 51 (MEER…VPPT), 70 to 100 (PFSLTMPTENTSAEQLKKKRGRPRKYNPDGT), and 113 to 133 (SVPLTSEFPPRKRGRGRGKSN). Polar residues predominate over residues 7–19 (TNINNNITSSFGL). Over residues 35-51 (DPPPRPENPNPFLVPPT) the composition is skewed to pro residues. Positions 71–83 (FSLTMPTENTSAE) are enriched in polar residues. The Bipartite nuclear localization signal motif lies at 86 to 94 (KKKRGRPRK). Residues 86 to 98 (KKKRGRPRKYNPD) constitute a DNA-binding region (a.T hook). A compositionally biased stretch (basic residues) spans 123 to 133 (RKRGRGRGKSN). A PPC domain is found at 163 to 308 (GANFTPHVLI…RFGAQPSSIS (146 aa)). Residues 359–404 (PFSSIPVGGGGGGEVGEEEGEEDDDELEGEDEEFGGDSQSDNEIPS) form a disordered region. Residues 373–393 (VGEEEGEEDDDELEGEDEEFG) are compositionally biased toward acidic residues.

In terms of assembly, homodimer. Interacts with AHL4. As to expression, expressed in both procambium and xylem precursors of the root meristem. Also detected in the endodermis in the late elongation zone and onwards.

It is found in the nucleus. Transcription factor that specifically binds AT-rich DNA sequences related to the nuclear matrix attachment regions (MARs). Acts redundantly with AHL4 to regulate the formation of tissue boundary between the xylem and procambium in the root meristem. This is AT-hook motif nuclear-localized protein 3 from Arabidopsis thaliana (Mouse-ear cress).